The following is a 640-amino-acid chain: Endoglucanase 2 (640 aa).

The N-terminal stretch at 1 to 34 (MARGGGAAGVSMAHHLGIALVVLVFAAMAQVARG) is a signal peptide. The Nucleophile role is filled by Asp-93. Catalysis depends on residues His-428, Asp-480, and Glu-489. A propeptide spans 512–640 (RARGRLGQSL…DVWVTGYKLV (129 aa)) (removed in mature form). Residue Asn-528 is glycosylated (N-linked (GlcNAc...) asparagine).

Belongs to the glycosyl hydrolase 9 (cellulase E) family. Expressed in roots and flowers.

The protein resides in the secreted. The enzyme catalyses Endohydrolysis of (1-&gt;4)-beta-D-glucosidic linkages in cellulose, lichenin and cereal beta-D-glucans.. Hydrolyzes 1,4-beta-glycosyl linkages of 1,4-beta-glucans and 1,3-1,4-beta-glucans. Possesses broad substrate specificity for hemicelluloses of type II cell walls. Substrate preference is carboxymethyl-cellulose &gt; 1,3-1,4-beta-glucan &gt; lichenan &gt; arabinoxylan &gt; phospho-swollen cellulose &gt; xylan &gt; glucomannan. May participate in lateral root development. This is Endoglucanase 2 (GLU5) from Oryza sativa subsp. japonica (Rice).